The following is a 387-amino-acid chain: Succinate--CoA ligase [ADP-forming] subunit beta (387 aa).

In terms of domain architecture, ATP-grasp spans 9 to 245 (KDLLESYGLK…KSQENAKELK (237 aa)). Residues lysine 46, 53–55 (GRG), glutamate 100, tyrosine 103, and glutamate 108 each bind ATP. Positions 200 and 214 each coordinate Mg(2+). Substrate is bound by residues asparagine 265 and 322 to 324 (GIV).

Belongs to the succinate/malate CoA ligase beta subunit family. Heterotetramer of two alpha and two beta subunits. Requires Mg(2+) as cofactor.

The enzyme catalyses succinate + ATP + CoA = succinyl-CoA + ADP + phosphate. The catalysed reaction is GTP + succinate + CoA = succinyl-CoA + GDP + phosphate. It participates in carbohydrate metabolism; tricarboxylic acid cycle; succinate from succinyl-CoA (ligase route): step 1/1. Functionally, succinyl-CoA synthetase functions in the citric acid cycle (TCA), coupling the hydrolysis of succinyl-CoA to the synthesis of either ATP or GTP and thus represents the only step of substrate-level phosphorylation in the TCA. The beta subunit provides nucleotide specificity of the enzyme and binds the substrate succinate, while the binding sites for coenzyme A and phosphate are found in the alpha subunit. This Francisella tularensis subsp. holarctica (strain FTNF002-00 / FTA) protein is Succinate--CoA ligase [ADP-forming] subunit beta.